The following is a 175-amino-acid chain: CASP-like protein 2C1 (175 aa).

Residues 1 to 7 (MVKLRET) lie on the Cytoplasmic side of the membrane. Residues 8–28 (EVILRLCIVFFLLLTSCLIGL) traverse the membrane as a helical segment. Over 29 to 45 (DSQTKEIAYIHKNVSFR) the chain is Extracellular. Asn-41 carries an N-linked (GlcNAc...) asparagine glycan. Residues 46–66 (YLLALEAELYIDVVVAAYNLV) traverse the membrane as a helical segment. Over 67 to 91 (QLGLGWYNVEQKTSNPKWFSYLLDQ) the chain is Cytoplasmic. The helical transmembrane segment at 92–112 (TAAYVVFAGTSAAAQHSLLVV) threads the bilayer. The Extracellular segment spans residues 113–136 (TGSRELQWMKWCYKFTRFCFQMGS). The helical transmembrane segment at 137-157 (AIILNYIAAALMVLLSSISAF) threads the bilayer. Residues 158–175 (NLFRLYSPKRFFRFKSSS) are Cytoplasmic-facing.

The protein belongs to the Casparian strip membrane proteins (CASP) family. As to quaternary structure, homodimer and heterodimers.

The protein localises to the cell membrane. This chain is CASP-like protein 2C1, found in Arabidopsis thaliana (Mouse-ear cress).